Consider the following 477-residue polypeptide: UDP-N-acetylmuramate--L-alanine ligase (477 aa).

An ATP-binding site is contributed by 122–128 (GTHGKTT).

This sequence belongs to the MurCDEF family.

It localises to the cytoplasm. It catalyses the reaction UDP-N-acetyl-alpha-D-muramate + L-alanine + ATP = UDP-N-acetyl-alpha-D-muramoyl-L-alanine + ADP + phosphate + H(+). The protein operates within cell wall biogenesis; peptidoglycan biosynthesis. In terms of biological role, cell wall formation. The chain is UDP-N-acetylmuramate--L-alanine ligase from Xylella fastidiosa (strain M23).